The primary structure comprises 74 residues: ATP synthase subunit 9, mitochondrial (74 aa).

Helical transmembrane passes span 8–28 (IGAG…GNVF) and 45–72 (LFGY…LILF).

It belongs to the ATPase C chain family. F-type ATPases have 2 components, CF(1) - the catalytic core - and CF(0) - the membrane proton channel. CF(1) has five subunits: alpha(3), beta(3), gamma(1), delta(1), epsilon(1). CF(0) has three main subunits: a, b and c.

The protein localises to the mitochondrion membrane. Functionally, this protein is one of the chains of the nonenzymatic membrane component (F0) of mitochondrial ATPase. This is ATP synthase subunit 9, mitochondrial (ATP9) from Pisum sativum (Garden pea).